Reading from the N-terminus, the 260-residue chain is Flavin-dependent thymidylate synthase (260 aa).

Residues 1 to 202 (MKIKLVSYSK…PRLFKYAGPN (202 aa)) enclose the ThyX domain. FAD-binding positions include serine 55, 79–81 (RHR), and glutamine 87. Residues 76 to 79 (QLVR), 87 to 91 (QMSHR), and arginine 141 contribute to the dUMP site. Residues 79 to 89 (RHRIASYTQMS) carry the ThyX motif motif. FAD is bound by residues 157-159 (NAR) and asparagine 163. DUMP is bound at residue arginine 168. The active-site Involved in ionization of N3 of dUMP, leading to its activation is arginine 168.

It belongs to the thymidylate synthase ThyX family. Homotetramer. Requires FAD as cofactor.

The enzyme catalyses dUMP + (6R)-5,10-methylene-5,6,7,8-tetrahydrofolate + NADPH + H(+) = dTMP + (6S)-5,6,7,8-tetrahydrofolate + NADP(+). It participates in pyrimidine metabolism; dTTP biosynthesis. Functionally, catalyzes the reductive methylation of 2'-deoxyuridine-5'-monophosphate (dUMP) to 2'-deoxythymidine-5'-monophosphate (dTMP) while utilizing 5,10-methylenetetrahydrofolate (mTHF) as the methyl donor, and NADPH and FADH(2) as the reductant. This is Flavin-dependent thymidylate synthase from Sulfolobus acidocaldarius (strain ATCC 33909 / DSM 639 / JCM 8929 / NBRC 15157 / NCIMB 11770).